The chain runs to 696 residues: D-(-)-3-hydroxybutyrate oligomer hydrolase (696 aa).

A signal peptide spans 1 to 26 (MTKLGWGRRVVWGAALAAVAMLGACN). The active-site Charge relay system is serine 309.

This sequence belongs to the D-(-)-3-hydroxybutyrate oligomer hydrolase family.

Its subcellular location is the secreted. It catalyses the reaction (3R)-hydroxybutanoate dimer + H2O = 2 (R)-3-hydroxybutanoate + H(+). It functions in the pathway lipid metabolism; butanoate metabolism. Participates in the degradation of poly-3-hydroxybutyrate (PHB). It works downstream of poly(3-hydroxybutyrate) depolymerase, hydrolyzing D(-)-3-hydroxybutyrate oligomers of various length (3HB-oligomers) into 3HB-monomers. This Burkholderia cenocepacia (strain HI2424) protein is D-(-)-3-hydroxybutyrate oligomer hydrolase.